We begin with the raw amino-acid sequence, 685 residues long: uncharacterized protein (685 aa).

Disordered regions lie at residues 502-538 and 635-685; these read NLNQ…SLNK and RSKR…IHNA. Residues 518-538 show a composition bias toward polar residues; that stretch reads SSENMTKFPSSRGKSTVSLNK. Residues 675–685 are compositionally biased toward basic residues; it reads KLKKSLIIHNA.

This is an uncharacterized protein from Homo sapiens (Human).